A 380-amino-acid chain; its full sequence is MAPNLRKSHPLLKMINNSLIDLPTPSNISAWWNFGSLLGICLATQILTGLLLAMHYTADTTLAFSSVAHTCRNVQYGWLIRNLHANGASFFFICVYLHIGRGLYYGSYLYKETWNTGILLLLTLMATAFVGYVLPWGQMSFWGATVITNLFSAIPYIGQTIVEWAWGGFSVDNPTLTRFFALHFLLPFAIAGLTLIHLTFLHESGSNNPLGIVSNCDKIPFHPYFSLKDALGFMLMFLPLTTLALFSPNLLGDPENFTPANPLVTPPHIKPEWYFLFAYAILRSIPNKLGGVLALAASVLILFLSPLLHKSKQRTMTFRPLSQLLFWTLVANLFILTWVGSQPVEHPFIIIGQLASLTYFTILLILFPITSALENKMLNY.

Helical transmembrane passes span 34 to 54 (FGSLLGICLATQILTGLLLAM), 78 to 99 (WLIRNLHANGASFFFICVYLHI), 114 to 134 (WNTGILLLLTLMATAFVGYVL), and 179 to 199 (FFALHFLLPFAIAGLTLIHLT). Heme b-binding residues include histidine 84 and histidine 98. Residues histidine 183 and histidine 197 each coordinate heme b. Histidine 202 provides a ligand contact to a ubiquinone. A run of 4 helical transmembrane segments spans residues 227–247 (LKDALGFMLMFLPLTTLALFS), 289–309 (LGGVLALAASVLILFLSPLLH), 321–341 (LSQLLFWTLVANLFILTWVGS), and 348–368 (FIIIGQLASLTYFTILLILFP).

The protein belongs to the cytochrome b family. In terms of assembly, the cytochrome bc1 complex contains 11 subunits: 3 respiratory subunits (MT-CYB, CYC1 and UQCRFS1), 2 core proteins (UQCRC1 and UQCRC2) and 6 low-molecular weight proteins (UQCRH/QCR6, UQCRB/QCR7, UQCRQ/QCR8, UQCR10/QCR9, UQCR11/QCR10 and a cleavage product of UQCRFS1). This cytochrome bc1 complex then forms a dimer. Requires heme b as cofactor.

Its subcellular location is the mitochondrion inner membrane. Its function is as follows. Component of the ubiquinol-cytochrome c reductase complex (complex III or cytochrome b-c1 complex) that is part of the mitochondrial respiratory chain. The b-c1 complex mediates electron transfer from ubiquinol to cytochrome c. Contributes to the generation of a proton gradient across the mitochondrial membrane that is then used for ATP synthesis. The chain is Cytochrome b (MT-CYB) from Oceanites oceanicus (Wilson's storm petrel).